A 1079-amino-acid polypeptide reads, in one-letter code: Translation initiation factor IF-2 (1079 aa).

3 stretches are compositionally biased toward basic and acidic residues: residues 52–65 (VQAQ…KEGN), 75–90 (RDGD…KAPE), and 102–134 (APER…KEPQ). The tract at residues 52–488 (VQAQRDGGAR…RGKKDVRPAA (437 aa)) is disordered. A compositionally biased stretch (low complexity) spans 150 to 184 (APVAKVVEAAPAETPAPEAPAVKATVTAEAAPAKT). Residues 185 to 194 (VEPESERPQA) show a composition bias toward basic and acidic residues. Positions 276-291 (AAVAQQQMQQQAAQQQ) are enriched in low complexity. The span at 306 to 327 (GGYRPEGQREGGYRPEGQREGG) shows a compositional bias: basic and acidic residues. Low complexity-rich tracts occupy residues 348–370 (EGGY…GPRP) and 380–398 (PGAP…APRP). Over residues 419–429 (PRPGGFGGAPG) the composition is skewed to gly residues. Basic and acidic residues predominate over residues 461–471 (PRGRSDDDVMR). Over residues 473-482 (PRGRGKRGKK) the composition is skewed to basic residues. The region spanning 578 to 745 (TRPPVVTIMG…LIAIQAEILE (168 aa)) is the tr-type G domain. Residues 587–594 (GHVDHGKT) form a G1 region. 587–594 (GHVDHGKT) provides a ligand contact to GTP. A G2 region spans residues 612-616 (GITQH). Residues 633 to 636 (DTPG) form a G3 region. GTP-binding positions include 633–637 (DTPGH) and 687–690 (NKMD). The G4 stretch occupies residues 687-690 (NKMD). The segment at 723 to 725 (SAK) is G5.

Belongs to the TRAFAC class translation factor GTPase superfamily. Classic translation factor GTPase family. IF-2 subfamily.

It localises to the cytoplasm. One of the essential components for the initiation of protein synthesis. Protects formylmethionyl-tRNA from spontaneous hydrolysis and promotes its binding to the 30S ribosomal subunits. Also involved in the hydrolysis of GTP during the formation of the 70S ribosomal complex. The chain is Translation initiation factor IF-2 from Nitratidesulfovibrio vulgaris (strain DP4) (Desulfovibrio vulgaris).